The primary structure comprises 109 residues: Oncomodulin-1 (109 aa).

Position 2 is an N-acetylserine (Ser-2). 2 EF-hand domains span residues 39–74 and 78–109; these read MSAN…FESG and LTES…MVHS. Residues Asp-52, Asp-54, Ser-56, Tyr-58, Glu-63, Asp-91, Asp-93, Asp-95, Lys-97, and Glu-102 each coordinate Ca(2+).

The protein belongs to the parvalbumin family.

Its function is as follows. Has some calmodulin-like activity with respect to enzyme activation and growth regulation. Binds two calcium ions. This chain is Oncomodulin-1 (OCM), found in Homo sapiens (Human).